An 81-amino-acid chain; its full sequence is UPF0386 protein Smed_0945 (81 aa).

The protein belongs to the UPF0386 family.

The protein is UPF0386 protein Smed_0945 of Sinorhizobium medicae (strain WSM419) (Ensifer medicae).